The primary structure comprises 149 residues: Arginine regulator (149 aa).

Belongs to the ArgR family.

It is found in the cytoplasm. It functions in the pathway amino-acid degradation; L-arginine degradation via ADI pathway. Its function is as follows. Regulates the transcription of the arc operon, involved in arginine catabolism. This Bacillus cereus (strain ATCC 10987 / NRS 248) protein is Arginine regulator (argR1).